The following is a 119-amino-acid chain: ATP-dependent Clp protease adapter protein ClpS (119 aa).

The interval M1–K33 is disordered.

It belongs to the ClpS family. In terms of assembly, binds to the N-terminal domain of the chaperone ClpA.

In terms of biological role, involved in the modulation of the specificity of the ClpAP-mediated ATP-dependent protein degradation. This is ATP-dependent Clp protease adapter protein ClpS from Variovorax paradoxus (strain S110).